Consider the following 251-residue polypeptide: 3-dehydroquinate dehydratase (251 aa).

3-dehydroquinate is bound by residues 47–49 and arginine 83; that span reads EWR. Histidine 144 functions as the Proton donor/acceptor in the catalytic mechanism. Residue lysine 171 is the Schiff-base intermediate with substrate of the active site. Residues arginine 214, serine 233, and glutamine 237 each coordinate 3-dehydroquinate.

This sequence belongs to the type-I 3-dehydroquinase family. In terms of assembly, homodimer.

It carries out the reaction 3-dehydroquinate = 3-dehydroshikimate + H2O. It participates in metabolic intermediate biosynthesis; chorismate biosynthesis; chorismate from D-erythrose 4-phosphate and phosphoenolpyruvate: step 3/7. Functionally, involved in the third step of the chorismate pathway, which leads to the biosynthesis of aromatic amino acids. Catalyzes the cis-dehydration of 3-dehydroquinate (DHQ) and introduces the first double bond of the aromatic ring to yield 3-dehydroshikimate. In Klebsiella pneumoniae subsp. pneumoniae (strain ATCC 700721 / MGH 78578), this protein is 3-dehydroquinate dehydratase.